The chain runs to 915 residues: Isoleucine--tRNA ligase (915 aa).

The short motif at 64-74 is the 'HIGH' region element; sequence PYANGNFHVGH. Glutamate 557 contacts L-isoleucyl-5'-AMP. The 'KMSKS' region signature appears at 598–602; sequence AMSKS. Residue lysine 601 coordinates ATP. Zn(2+)-binding residues include cysteine 887, cysteine 890, cysteine 902, and cysteine 905.

Belongs to the class-I aminoacyl-tRNA synthetase family. IleS type 1 subfamily. In terms of assembly, monomer. The cofactor is Zn(2+).

The protein resides in the cytoplasm. The enzyme catalyses tRNA(Ile) + L-isoleucine + ATP = L-isoleucyl-tRNA(Ile) + AMP + diphosphate. Its function is as follows. Catalyzes the attachment of isoleucine to tRNA(Ile). As IleRS can inadvertently accommodate and process structurally similar amino acids such as valine, to avoid such errors it has two additional distinct tRNA(Ile)-dependent editing activities. One activity is designated as 'pretransfer' editing and involves the hydrolysis of activated Val-AMP. The other activity is designated 'posttransfer' editing and involves deacylation of mischarged Val-tRNA(Ile). The sequence is that of Isoleucine--tRNA ligase from Leptospira biflexa serovar Patoc (strain Patoc 1 / ATCC 23582 / Paris).